The sequence spans 536 residues: MSDIWQQLSAHRAATEATPLTDYFAQDADRFARYSASAGEMLLDYSKTALDDTARDLLVQLAESVDLKSRIAAMMSGAKINSTENRAVLHTALRAPKDAVIEVDGENVVPGIQKVLAQMGAFATALREGSYQTKTGTAFTDVVNIGIGGSDLGPVMATLALAPYHDGPACHFVSNVDGAHIHDVLAGLNPETTLVVIASKTFTTIETMTNAETAIQWLKGALGEDVSTHLAAVSTALDKTAAMGIPDARVFGFADWVGGRYSMWGPIGLPIMIAVGPESFGEFLAGAAAMDQHFRDAPLMENLPALLGLIGVWHNNICGYGSRAVLPYDQRLSRLPAYLQQLDMESNGKSVALDGSPLPRASGPVVWGEPGTNGQHAFYQLLHQGTQVIPTEFLIAATGHEPELAHQHNLLKANCLAQSEALMLGRSWDEAREIAIARGFDGVDADRMAGHLSFPGNRPSVTLAYPKLTPFVFGQIVALYEHRVFTEGVIWGINSFDQWGVELGKELATRLLPMVEGADASQKDASTRGLLAKLST.

E345 acts as the Proton donor in catalysis. Residues H376 and K505 contribute to the active site.

The protein belongs to the GPI family.

The protein localises to the cytoplasm. It carries out the reaction alpha-D-glucose 6-phosphate = beta-D-fructose 6-phosphate. Its pathway is carbohydrate biosynthesis; gluconeogenesis. It participates in carbohydrate degradation; glycolysis; D-glyceraldehyde 3-phosphate and glycerone phosphate from D-glucose: step 2/4. Its function is as follows. Catalyzes the reversible isomerization of glucose-6-phosphate to fructose-6-phosphate. The chain is Glucose-6-phosphate isomerase from Ruegeria sp. (strain TM1040) (Silicibacter sp.).